A 220-amino-acid polypeptide reads, in one-letter code: Large ribosomal subunit protein uL10c (220 aa).

A chloroplast-targeting transit peptide spans 1–41 (MEVALLSFSSSLSPLCHQRISTLTPKTSNSPNYPRLPVIRS).

The protein belongs to the universal ribosomal protein uL10 family. As to quaternary structure, part of the 50S ribosomal subunit.

The protein resides in the plastid. The protein localises to the chloroplast. This protein binds directly to 23S ribosomal RNA. The sequence is that of Large ribosomal subunit protein uL10c (RPL10) from Arabidopsis thaliana (Mouse-ear cress).